The sequence spans 341 residues: Probable alcohol acetyltransferase (341 aa).

A mitochondrion-targeting transit peptide spans 1–40; the sequence is MFASRILRNSAQTLKTELPHKETIKMAYDLHKPRSTAIRH. One can recognise an AB hydrolase-1 domain in the interval 48–301; the sequence is PILFLHGIFG…NSNHDILDQR (254 aa). Catalysis depends on charge relay system residues Ser121, Asp145, and His295.

The protein belongs to the AB hydrolase superfamily.

It is found in the mitochondrion. In terms of biological role, probable alcohol acetyltransferase that uses acetyl-CoA to synthesize acetate esters from various alcohols. Not involved in the synthesis of ethyl acetate. The polypeptide is Probable alcohol acetyltransferase (EAT2) (Wickerhamomyces anomalus (strain ATCC 58044 / CBS 1984 / NCYC 433 / NRRL Y-366-8) (Yeast)).